Here is a 248-residue protein sequence, read N- to C-terminus: tRNA1(Val) (adenine(37)-N6)-methyltransferase (248 aa).

Belongs to the methyltransferase superfamily. tRNA (adenine-N(6)-)-methyltransferase family.

The protein resides in the cytoplasm. It carries out the reaction adenosine(37) in tRNA1(Val) + S-adenosyl-L-methionine = N(6)-methyladenosine(37) in tRNA1(Val) + S-adenosyl-L-homocysteine + H(+). Functionally, specifically methylates the adenine in position 37 of tRNA(1)(Val) (anticodon cmo5UAC). This is tRNA1(Val) (adenine(37)-N6)-methyltransferase from Yersinia pseudotuberculosis serotype O:1b (strain IP 31758).